The following is a 629-amino-acid chain: tRNA uridine 5-carboxymethylaminomethyl modification enzyme MnmG (629 aa).

13-18 (GGGHAG) lines the FAD pocket. NAD(+) is bound at residue 273-287 (GPRYCPSIEDKIHRF).

Belongs to the MnmG family. As to quaternary structure, homodimer. Heterotetramer of two MnmE and two MnmG subunits. FAD is required as a cofactor.

The protein resides in the cytoplasm. In terms of biological role, NAD-binding protein involved in the addition of a carboxymethylaminomethyl (cmnm) group at the wobble position (U34) of certain tRNAs, forming tRNA-cmnm(5)s(2)U34. The protein is tRNA uridine 5-carboxymethylaminomethyl modification enzyme MnmG of Shewanella baltica (strain OS223).